We begin with the raw amino-acid sequence, 450 residues long: Glucose-6-phosphate isomerase (450 aa).

Glu-289 (proton donor) is an active-site residue. Catalysis depends on residues His-310 and Lys-424.

The protein belongs to the GPI family.

Its subcellular location is the cytoplasm. It catalyses the reaction alpha-D-glucose 6-phosphate = beta-D-fructose 6-phosphate. The protein operates within carbohydrate biosynthesis; gluconeogenesis. It functions in the pathway carbohydrate degradation; glycolysis; D-glyceraldehyde 3-phosphate and glycerone phosphate from D-glucose: step 2/4. Catalyzes the reversible isomerization of glucose-6-phosphate to fructose-6-phosphate. The sequence is that of Glucose-6-phosphate isomerase from Leptospira biflexa serovar Patoc (strain Patoc 1 / Ames).